We begin with the raw amino-acid sequence, 257 residues long: High-affinity copper transporter ctrC (257 aa).

2 helical membrane-spanning segments follow: residues 79–99 (RGMF…LEFL) and 202–222 (YFNG…SFIF).

It belongs to the copper transporter (Ctr) (TC 1.A.56) family. SLC31A subfamily.

The protein resides in the cell membrane. It catalyses the reaction Cu(2+)(in) = Cu(2+)(out). In terms of biological role, high-affinity copper transporter of plasma membrane that mediates copper uptake under low copper conditions. The mechanism driving the transmembrane transport of copper has still to be determined. Acts as a potential virulence factor. The polypeptide is High-affinity copper transporter ctrC (Aspergillus fumigatus (strain ATCC MYA-4609 / CBS 101355 / FGSC A1100 / Af293) (Neosartorya fumigata)).